The sequence spans 890 residues: DNA mismatch repair protein MutS (890 aa).

Position 645-652 (645-652 (GPNMAGKS)) interacts with ATP.

The protein belongs to the DNA mismatch repair MutS family.

In terms of biological role, this protein is involved in the repair of mismatches in DNA. It is possible that it carries out the mismatch recognition step. This protein has a weak ATPase activity. The protein is DNA mismatch repair protein MutS of Rickettsia rickettsii (strain Iowa).